Here is a 322-residue protein sequence, read N- to C-terminus: GTP 3',8-cyclase (322 aa).

The Radical SAM core domain maps to 5 to 217; sequence SYGRVVDYLR…DIISKKYNIK (213 aa). Arginine 14 contributes to the GTP binding site. Residues cysteine 21 and cysteine 25 each contribute to the [4Fe-4S] cluster site. Residue tyrosine 27 participates in S-adenosyl-L-methionine binding. Residue cysteine 28 coordinates [4Fe-4S] cluster. Arginine 64 serves as a coordination point for GTP. Glycine 68 is a binding site for S-adenosyl-L-methionine. Residue threonine 95 participates in GTP binding. S-adenosyl-L-methionine is bound at residue serine 119. Residue lysine 155 participates in GTP binding. Methionine 189 serves as a coordination point for S-adenosyl-L-methionine. The [4Fe-4S] cluster site is built by cysteine 249 and cysteine 252. A GTP-binding site is contributed by 254–256; that stretch reads RLR. Cysteine 266 serves as a coordination point for [4Fe-4S] cluster.

This sequence belongs to the radical SAM superfamily. MoaA family. In terms of assembly, monomer and homodimer. Requires [4Fe-4S] cluster as cofactor.

It catalyses the reaction GTP + AH2 + S-adenosyl-L-methionine = (8S)-3',8-cyclo-7,8-dihydroguanosine 5'-triphosphate + 5'-deoxyadenosine + L-methionine + A + H(+). Its pathway is cofactor biosynthesis; molybdopterin biosynthesis. Functionally, catalyzes the cyclization of GTP to (8S)-3',8-cyclo-7,8-dihydroguanosine 5'-triphosphate. This Campylobacter fetus subsp. fetus (strain 82-40) protein is GTP 3',8-cyclase.